A 157-amino-acid polypeptide reads, in one-letter code: SsrA-binding protein (157 aa).

This sequence belongs to the SmpB family.

It localises to the cytoplasm. In terms of biological role, required for rescue of stalled ribosomes mediated by trans-translation. Binds to transfer-messenger RNA (tmRNA), required for stable association of tmRNA with ribosomes. tmRNA and SmpB together mimic tRNA shape, replacing the anticodon stem-loop with SmpB. tmRNA is encoded by the ssrA gene; the 2 termini fold to resemble tRNA(Ala) and it encodes a 'tag peptide', a short internal open reading frame. During trans-translation Ala-aminoacylated tmRNA acts like a tRNA, entering the A-site of stalled ribosomes, displacing the stalled mRNA. The ribosome then switches to translate the ORF on the tmRNA; the nascent peptide is terminated with the 'tag peptide' encoded by the tmRNA and targeted for degradation. The ribosome is freed to recommence translation, which seems to be the essential function of trans-translation. The chain is SsrA-binding protein from Clostridium novyi (strain NT).